Here is a 165-residue protein sequence, read N- to C-terminus: 3-isopropylmalate dehydratase small subunit (165 aa).

This sequence belongs to the LeuD family. LeuD type 2 subfamily. As to quaternary structure, heterodimer of LeuC and LeuD.

It catalyses the reaction (2R,3S)-3-isopropylmalate = (2S)-2-isopropylmalate. The protein operates within amino-acid biosynthesis; L-leucine biosynthesis; L-leucine from 3-methyl-2-oxobutanoate: step 2/4. Functionally, catalyzes the isomerization between 2-isopropylmalate and 3-isopropylmalate, via the formation of 2-isopropylmaleate. This Saccharolobus islandicus (strain M.16.27) (Sulfolobus islandicus) protein is 3-isopropylmalate dehydratase small subunit.